The chain runs to 338 residues: MENLDALVSQALEAVERAEDINALEQIRVNYLGKKGELTQVMKTLGNLPAEERPKVGALINDAKERVTVVLNARKAAFEEAELSARLAAECIDVTLPGRGQATGGLHPITRTLERIEQFFTHIGYGIAEGPEVEDDYHNFEALNIPGHHPARAMHDTFYFNANMLLRTHTSPVQVRTMESTQPPIRIVCPGRVYRCDSDITHSPMFHQVEGLLIDRDINFADLKGTIEEFLRVFFEKELAVRFRPSFFPFTEPSAEVDIQCVMCSGNGCRVCKQTGWLEVMGCGMVHPNVLRMSGIDPEEFQGFAFGMGAERLAMLRYGVNDLRLFFDNDLRFLAQFR.

Residue Glu-252 participates in Mg(2+) binding.

Belongs to the class-II aminoacyl-tRNA synthetase family. Phe-tRNA synthetase alpha subunit type 1 subfamily. Tetramer of two alpha and two beta subunits. Mg(2+) is required as a cofactor.

Its subcellular location is the cytoplasm. The enzyme catalyses tRNA(Phe) + L-phenylalanine + ATP = L-phenylalanyl-tRNA(Phe) + AMP + diphosphate + H(+). The polypeptide is Phenylalanine--tRNA ligase alpha subunit (Pseudomonas putida (strain ATCC 700007 / DSM 6899 / JCM 31910 / BCRC 17059 / LMG 24140 / F1)).